Here is a 441-residue protein sequence, read N- to C-terminus: Xylose isomerase (441 aa).

Residues H99 and D102 contribute to the active site. The Mg(2+) site is built by E230, E266, H269, D294, D305, D307, and D337.

The protein belongs to the xylose isomerase family. Homotetramer. Requires Mg(2+) as cofactor.

It is found in the cytoplasm. It carries out the reaction alpha-D-xylose = alpha-D-xylulofuranose. Exhibits xylose isomerase activity. In Bacillus sp. (strain LW2), this protein is Xylose isomerase (xylA).